The following is a 525-amino-acid chain: Putative ribose/galactose/methyl galactoside import ATP-binding protein (525 aa).

Polar residues predominate over residues 1–15 (MFGSATANPPAQRNL). The interval 1 to 23 (MFGSATANPPAQRNLPSGDGDGG) is disordered. ABC transporter domains lie at 33-269 (LEIS…VGRE) and 279-523 (KPAG…SGHK). ATP is bound at residue 65–72 (GENGAGKS).

This sequence belongs to the ABC transporter superfamily. Carbohydrate importer 2 (CUT2) (TC 3.A.1.2) family.

It localises to the cell inner membrane. The enzyme catalyses D-ribose(out) + ATP + H2O = D-ribose(in) + ADP + phosphate + H(+). It catalyses the reaction D-galactose(out) + ATP + H2O = D-galactose(in) + ADP + phosphate + H(+). In terms of biological role, part of an ABC transporter complex involved in carbohydrate import. Could be involved in ribose, galactose and/or methyl galactoside import. Responsible for energy coupling to the transport system. The chain is Putative ribose/galactose/methyl galactoside import ATP-binding protein from Pseudomonas syringae pv. syringae (strain B728a).